The sequence spans 25 residues: Caerin-1.6 (25 aa).

Position 25 is a leucine amide (leucine 25).

It belongs to the frog skin active peptide (FSAP) family. Caerin subfamily. In terms of tissue distribution, expressed by the skin dorsal glands.

Its subcellular location is the secreted. Its function is as follows. Antimicrobial peptide. Adopts an alpha helical conformation which can disrupt bacterial membranes. Strongly inhibits the formation of NO by neuronal nitric oxide synthase (nNOS) at micromolar concentrations. Acts by a non-competitive mechanism, probably by binding to calcium/calmodulin and as a consequence blocking calmodulin attachment to nNOS. In terms of biological role, does not show antimicrobial activity. The chain is Caerin-1.6 from Ranoidea chloris (Red-eyed tree frog).